Here is a 269-residue protein sequence, read N- to C-terminus: Monofunctional glycosyltransferase (269 aa).

The chain crosses the membrane as a helical span at residues 46–66 (ILLTILIIIALFIGIMYFLST).

This sequence belongs to the glycosyltransferase 51 family.

It is found in the cell membrane. The enzyme catalyses [GlcNAc-(1-&gt;4)-Mur2Ac(oyl-L-Ala-gamma-D-Glu-L-Lys-D-Ala-D-Ala)](n)-di-trans,octa-cis-undecaprenyl diphosphate + beta-D-GlcNAc-(1-&gt;4)-Mur2Ac(oyl-L-Ala-gamma-D-Glu-L-Lys-D-Ala-D-Ala)-di-trans,octa-cis-undecaprenyl diphosphate = [GlcNAc-(1-&gt;4)-Mur2Ac(oyl-L-Ala-gamma-D-Glu-L-Lys-D-Ala-D-Ala)](n+1)-di-trans,octa-cis-undecaprenyl diphosphate + di-trans,octa-cis-undecaprenyl diphosphate + H(+). Its pathway is cell wall biogenesis; peptidoglycan biosynthesis. Its function is as follows. Peptidoglycan polymerase that catalyzes glycan chain elongation using lipid-linked disaccharide-pentapeptide as the substrate. This Staphylococcus aureus (strain JH1) protein is Monofunctional glycosyltransferase.